Here is a 308-residue protein sequence, read N- to C-terminus: Ecto-ADP-ribosyltransferase 5 (308 aa).

An N-terminal signal peptide occupies residues 1–23; the sequence is MILEDLLMVLSCLALHILWKVQA. Cysteines 43 and 259 form a disulfide. Residues 63–253 enclose the TR mART core domain; sequence ALLRESWEAA…IVTLWSYNQT (191 aa). Position 100 (Tyr100) interacts with NAD(+). Asn102 carries an N-linked (GlcNAc...) asparagine glycan. The NAD(+) site is built by Arg161 and Gln181. Residue Arg161 is part of the active site. The active site involves Ser184. Residue Asn197 is glycosylated (N-linked (GlcNAc...) asparagine). Ser215 contacts NAD(+). Glu222 is a catalytic residue. A glycan (N-linked (GlcNAc...) asparagine) is linked at Asn251.

This sequence belongs to the Arg-specific ADP-ribosyltransferase family.

The protein resides in the secreted. Its subcellular location is the membrane. The enzyme catalyses L-arginyl-[protein] + NAD(+) = N(omega)-(ADP-D-ribosyl)-L-arginyl-[protein] + nicotinamide + H(+). The polypeptide is Ecto-ADP-ribosyltransferase 5 (Art5) (Rattus norvegicus (Rat)).